We begin with the raw amino-acid sequence, 501 residues long: MNTMSHKFVLALDEGTTSARAILFDSDLNIVNIGQYEFPQYYPQPGYVEHDPEEIWEAQMLAVKKAISKIDAKQIVAIGITNQRETTVLWDAKSGKPVYNAIVWQDRRTSPITDWLKANYFKMIKDKTGLVPDPYFSASKIKWILDNVPNVREKAERGEIKFGTLDTYLIWRLTNGKAHVTDYSNASRTMLFNINKLECDREILELLKIPESILPEVKPSSEIYGYSEALGNLIPISGDAGDQQAALFGQVAFNVGEIKATYGTGSFILMNIGNNPIRSENLLTTIAWGLEKNKATYALEGSIFITGAAVQWFRDGLRAIDVSDEIEPLASNVEDNGGVYFVPAFVGLGAPYWDPYARGLIIGITRGTTKAHIARAILESMAYQTRDVIEVMQKESGISINSLKVDGGAAKDNLLMQFQADILGIKVIRPKVMETTSMGVAMLAGLGVGLWNSLEELRSIWKVDKEFIPSMSEEKRRALYSGWKEAVKRAMGWAKVVGGQV.

T16 is a binding site for ADP. ATP-binding residues include T16, T17, and S18. A sn-glycerol 3-phosphate-binding site is contributed by T16. R20 lines the ADP pocket. Residues R84, E85, Y135, and D242 each coordinate sn-glycerol 3-phosphate. The glycerol site is built by R84, E85, Y135, D242, and Q243. Positions 264 and 307 each coordinate ADP. Positions 264, 307, 311, and 408 each coordinate ATP. An ADP-binding site is contributed by G408.

It belongs to the FGGY kinase family.

It carries out the reaction glycerol + ATP = sn-glycerol 3-phosphate + ADP + H(+). The protein operates within polyol metabolism; glycerol degradation via glycerol kinase pathway; sn-glycerol 3-phosphate from glycerol: step 1/1. Functionally, key enzyme in the regulation of glycerol uptake and metabolism. Catalyzes the phosphorylation of glycerol to yield sn-glycerol 3-phosphate. The protein is Glycerol kinase 1 of Saccharolobus solfataricus (strain ATCC 35092 / DSM 1617 / JCM 11322 / P2) (Sulfolobus solfataricus).